A 590-amino-acid chain; its full sequence is G protein-coupled receptor kinase 5 (590 aa).

The interval 1–185 (MELENIVANT…LERQPVTKNT (185 aa)) is N-terminal. The interaction with calmodulin stretch occupies residues 20-39 (GGKRKGKSKKWKEILKFPHI). In terms of domain architecture, RGS spans 53 to 171 (YCSLCDKQPV…LDSMYFDRFL (119 aa)). The 263-residue stretch at 186 to 448 (FRQYRVLGKG…AAEVKRHPFF (263 aa)) folds into the Protein kinase domain. Residues 192 to 200 (LGKGGFGEV) and K215 each bind ATP. D311 functions as the Proton acceptor in the catalytic mechanism. Residues 388 to 395 (RKEKVKRE) carry the Nuclear localization signal motif. The AGC-kinase C-terminal domain maps to 449–514 (RNMNFKRLEA…GSVPIPWQSE (66 aa)). S484 is subject to Phosphoserine; by autocatalysis. Residue T485 is modified to Phosphothreonine; by autocatalysis. The interval 546–565 (PKKGLLQRLFKRQHQNNSKS) is sufficient for membrane localization. Residues 554–590 (LFKRQHQNNSKSSPNSKTSFNHHINSNHVSSNSTGSS) form a disordered region. A compositionally biased stretch (low complexity) spans 561 to 590 (NNSKSSPNSKTSFNHHINSNHVSSNSTGSS). The residue at position 579 (S579) is a Phosphoserine.

This sequence belongs to the protein kinase superfamily. AGC Ser/Thr protein kinase family. GPRK subfamily. As to quaternary structure, interacts with ST13 (via the C-terminus 303-319 AA). Interacts with TP53/p53. Interacts with HTR4 (via C-terminus 330-346 AA); this interaction is promoted by 5-HT (serotonin). Interacts with HDAC5. Interacts with GIT1. Post-translationally, autophosphorylated. Autophosphorylation may play a critical role in the regulation of GRK5 kinase activity. In terms of tissue distribution, highest levels in lung, heart, retina, lingual epithelium. Very little in brain, liver, kidney.

Its subcellular location is the cytoplasm. The protein resides in the nucleus. It is found in the cell membrane. The catalysed reaction is [G-protein-coupled receptor] + ATP = [G-protein-coupled receptor]-phosphate + ADP + H(+). Its activity is regulated as follows. Inhibited by calmodulin with an IC(50) of 50 nM. Calmodulin inhibits GRK5 association with receptor and phospholipid. Serine/threonine kinase that phosphorylates preferentially the activated forms of a variety of G-protein-coupled receptors (GPCRs). Such receptor phosphorylation initiates beta-arrestin-mediated receptor desensitization, internalization, and signaling events leading to their down-regulation. Phosphorylates a variety of GPCRs, including adrenergic receptors (Beta-2 adrenergic receptor), muscarinic acetylcholine receptors (more specifically Gi-coupled M2/M4 subtypes), dopamine receptors and opioid receptors. In addition to GPCRs, also phosphorylates various substrates: Hsc70-interacting protein/ST13, TP53/p53, HDAC5, and arrestin-1/ARRB1. Phosphorylation of ARRB1 by GRK5 inhibits G-protein independent MAPK1/MAPK3 signaling downstream of 5HT4-receptors. Phosphorylation of HDAC5, a repressor of myocyte enhancer factor 2 (MEF2) leading to nuclear export of HDAC5 and allowing MEF2-mediated transcription. Phosphorylation of TP53/p53, a crucial tumor suppressor, inhibits TP53/p53-mediated apoptosis. Phosphorylation of ST13 regulates internalization of the chemokine receptor. Phosphorylates rhodopsin (RHO) (in vitro) and a non G-protein-coupled receptor, LRP6 during Wnt signaling (in vitro). The chain is G protein-coupled receptor kinase 5 (GRK5) from Bos taurus (Bovine).